The sequence spans 158 residues: Phosphopantetheine adenylyltransferase (158 aa).

Thr-9 provides a ligand contact to substrate. Residues 9-10 (TF) and His-17 each bind ATP. Substrate is bound by residues Lys-41, Leu-73, and Arg-87. ATP is bound by residues 88-90 (GVR), Glu-98, and 123-129 (WSYVSST).

Belongs to the bacterial CoaD family. As to quaternary structure, homohexamer. It depends on Mg(2+) as a cofactor.

The protein resides in the cytoplasm. The enzyme catalyses (R)-4'-phosphopantetheine + ATP + H(+) = 3'-dephospho-CoA + diphosphate. Its pathway is cofactor biosynthesis; coenzyme A biosynthesis; CoA from (R)-pantothenate: step 4/5. In terms of biological role, reversibly transfers an adenylyl group from ATP to 4'-phosphopantetheine, yielding dephospho-CoA (dPCoA) and pyrophosphate. This is Phosphopantetheine adenylyltransferase from Histophilus somni (strain 129Pt) (Haemophilus somnus).